The chain runs to 318 residues: N-acetyl-gamma-glutamyl-phosphate reductase (318 aa).

Cysteine 132 is a catalytic residue.

This sequence belongs to the NAGSA dehydrogenase family. Type 1 subfamily.

It localises to the cytoplasm. The catalysed reaction is N-acetyl-L-glutamate 5-semialdehyde + phosphate + NADP(+) = N-acetyl-L-glutamyl 5-phosphate + NADPH + H(+). The protein operates within amino-acid biosynthesis; L-arginine biosynthesis; N(2)-acetyl-L-ornithine from L-glutamate: step 3/4. Its function is as follows. Catalyzes the NADPH-dependent reduction of N-acetyl-5-glutamyl phosphate to yield N-acetyl-L-glutamate 5-semialdehyde. The chain is N-acetyl-gamma-glutamyl-phosphate reductase from Azobacteroides pseudotrichonymphae genomovar. CFP2.